Consider the following 1013-residue polypeptide: Lysosomal alpha-mannosidase (1013 aa).

A signal peptide spans 1 to 49 (MGTGPLTSGVRAGGGNTGWLWMSSCNLGSPVLPISFLFWLLLAAPGARA). 2 cysteine pairs are disulfide-bonded: cysteine 55–cysteine 358 and cysteine 268–cysteine 273. Residues histidine 72, aspartate 74, and aspartate 196 each coordinate Zn(2+). Aspartate 196 functions as the Nucleophile in the catalytic mechanism. 3 N-linked (GlcNAc...) asparagine glycosylation sites follow: asparagine 310, asparagine 345, and asparagine 367. An intrachain disulfide couples cysteine 412 to cysteine 472. Residue histidine 446 coordinates Zn(2+). 8 N-linked (GlcNAc...) asparagine glycosylation sites follow: asparagine 489, asparagine 497, asparagine 544, asparagine 633, asparagine 646, asparagine 693, asparagine 767, and asparagine 931. The cysteines at positions 493 and 501 are disulfide-linked.

This sequence belongs to the glycosyl hydrolase 38 family. Requires Zn(2+) as cofactor.

The protein resides in the lysosome. It catalyses the reaction Hydrolysis of terminal, non-reducing alpha-D-mannose residues in alpha-D-mannosides.. Functionally, necessary for the catabolism of N-linked carbohydrates released during glycoprotein turnover. The chain is Lysosomal alpha-mannosidase (Man2b1) from Mus musculus (Mouse).